The sequence spans 72 residues: Protein kish-A (72 aa).

The first 26 residues, 1–26 (MSAIFNFQSLLIVILLLICTCAYLRA), serve as a signal peptide directing secretion. The Extracellular portion of the chain corresponds to 27-53 (LVPNLLDKNKTGILGIFWKCARIGERK). Asn35 carries N-linked (GlcNAc...) asparagine glycosylation. Residues 54-71 (SPYVAVCCVVMAFSILFM) traverse the membrane as a helical segment. Position 72 (Gln72) is a topological domain, cytoplasmic.

Belongs to the KISH family.

The protein localises to the golgi apparatus membrane. Its function is as follows. Involved in the early part of the secretory pathway. This is Protein kish-A (tmem167a) from Xenopus tropicalis (Western clawed frog).